Consider the following 479-residue polypeptide: Probable periplasmic serine endoprotease DegP-like (479 aa).

The first 27 residues, 1–27 (MSMPSLKKYAAALFAVFLMGQSVAAHA), serve as a signal peptide directing secretion. Active-site charge relay system residues include H118, D148, and S221. Substrate-binding positions include 219-221 (GNS) and 276-280 (LGVVI). 2 consecutive PDZ domains span residues 265 to 356 (LKAS…VREG) and 362 to 468 (KVAV…LRQG). The tract at residues 368-390 (MPADDGDEATNDAAPSAERSSNR) is disordered.

Belongs to the peptidase S1C family.

It is found in the periplasm. It carries out the reaction Acts on substrates that are at least partially unfolded. The cleavage site P1 residue is normally between a pair of hydrophobic residues, such as Val-|-Val.. Its function is as follows. Might be efficient in the degradation of transiently denatured and unfolded proteins which accumulate in the periplasm following stress conditions. This is Probable periplasmic serine endoprotease DegP-like from Pseudomonas fulva (strain 12-X).